A 237-amino-acid chain; its full sequence is Intracellular ribonuclease LX (237 aa).

Residues 1–24 constitute a propeptide that is removed on maturation; it reads MMKSQKKLLIKIIVVQCLLVLCVT. Residue Q36 coordinates RNA. Cysteines 42 and 48 form a disulfide. RNA is bound by residues H63, F113, 116–117, and 120–121; these read HE and KH. H63 (proton donor) is an active-site residue. 3 disulfide bridges follow: C78-C124, C183-C219, and C199-C210. The active site involves E117. The active-site Proton acceptor is the H121.

It belongs to the RNase T2 family.

The protein resides in the cytoplasm. It catalyses the reaction a ribonucleotidyl-ribonucleotide-RNA + H2O = a 3'-end 3'-phospho-ribonucleotide-RNA + a 5'-end dephospho-ribonucleoside-RNA + H(+). The polypeptide is Intracellular ribonuclease LX (RNALX) (Solanum lycopersicum (Tomato)).